The chain runs to 318 residues: Peptidyl-prolyl cis-trans isomerase CPR4 (318 aa).

A signal peptide spans 1–20 (MWLKSLLLCLYSLVLCQVHA). The 171-residue stretch at 55-225 (YFDPVSKSMK…HELRFLYFVL (171 aa)) folds into the PPIase cyclophilin-type domain. The N-linked (GlcNAc...) asparagine glycan is linked to Asn-166. The chain crosses the membrane as a helical span at residues 286–303 (ISRALMCLTVLGLCFIAY).

The protein resides in the membrane. It catalyses the reaction [protein]-peptidylproline (omega=180) = [protein]-peptidylproline (omega=0). PPIases accelerate the folding of proteins. It catalyzes the cis-trans isomerization of proline imidic peptide bonds in oligopeptides. This Saccharomyces cerevisiae (strain ATCC 204508 / S288c) (Baker's yeast) protein is Peptidyl-prolyl cis-trans isomerase CPR4 (CPR4).